A 198-amino-acid polypeptide reads, in one-letter code: Probable chemoreceptor glutamine deamidase CheD (198 aa).

It belongs to the CheD family.

The enzyme catalyses L-glutaminyl-[protein] + H2O = L-glutamyl-[protein] + NH4(+). Its function is as follows. Probably deamidates glutamine residues to glutamate on methyl-accepting chemotaxis receptors (MCPs), playing an important role in chemotaxis. This is Probable chemoreceptor glutamine deamidase CheD from Xanthomonas euvesicatoria pv. vesicatoria (strain 85-10) (Xanthomonas campestris pv. vesicatoria).